A 127-amino-acid chain; its full sequence is Glycine cleavage system H protein (127 aa).

In terms of domain architecture, Lipoyl-binding spans 23–105; the sequence is KVSVGITDFA…YGEGWIAVIE (83 aa). N6-lipoyllysine is present on Lys-64.

This sequence belongs to the GcvH family. The glycine cleavage system is composed of four proteins: P, T, L and H. (R)-lipoate serves as cofactor.

In terms of biological role, the glycine cleavage system catalyzes the degradation of glycine. The H protein shuttles the methylamine group of glycine from the P protein to the T protein. In Coprothermobacter proteolyticus (strain ATCC 35245 / DSM 5265 / OCM 4 / BT), this protein is Glycine cleavage system H protein.